Reading from the N-terminus, the 286-residue chain is Protein FAM87A (286 aa).

2 helical membrane passes run 68–88 (YLHS…ETAL) and 161–181 (SFFV…GDML).

It belongs to the FAM87 family.

The protein localises to the membrane. In Homo sapiens (Human), this protein is Protein FAM87A (FAM87A).